The chain runs to 394 residues: Phosphopentomutase (394 aa).

The Mn(2+) site is built by aspartate 14, aspartate 287, histidine 292, aspartate 328, histidine 329, and histidine 340.

This sequence belongs to the phosphopentomutase family. Requires Mn(2+) as cofactor.

It is found in the cytoplasm. The enzyme catalyses 2-deoxy-alpha-D-ribose 1-phosphate = 2-deoxy-D-ribose 5-phosphate. It carries out the reaction alpha-D-ribose 1-phosphate = D-ribose 5-phosphate. The protein operates within carbohydrate degradation; 2-deoxy-D-ribose 1-phosphate degradation; D-glyceraldehyde 3-phosphate and acetaldehyde from 2-deoxy-alpha-D-ribose 1-phosphate: step 1/2. Functionally, isomerase that catalyzes the conversion of deoxy-ribose 1-phosphate (dRib-1-P) and ribose 1-phosphate (Rib-1-P) to deoxy-ribose 5-phosphate (dRib-5-P) and ribose 5-phosphate (Rib-5-P), respectively. This chain is Phosphopentomutase, found in Shouchella clausii (strain KSM-K16) (Alkalihalobacillus clausii).